The chain runs to 294 residues: Pyridoxal 5'-phosphate synthase subunit PdxS (294 aa).

A D-ribose 5-phosphate-binding site is contributed by D24. K81 functions as the Schiff-base intermediate with D-ribose 5-phosphate in the catalytic mechanism. G153 lines the D-ribose 5-phosphate pocket. R165 serves as a coordination point for D-glyceraldehyde 3-phosphate. D-ribose 5-phosphate contacts are provided by residues G214 and G235–S236.

The protein belongs to the PdxS/SNZ family. As to quaternary structure, in the presence of PdxT, forms a dodecamer of heterodimers.

The catalysed reaction is aldehydo-D-ribose 5-phosphate + D-glyceraldehyde 3-phosphate + L-glutamine = pyridoxal 5'-phosphate + L-glutamate + phosphate + 3 H2O + H(+). The protein operates within cofactor biosynthesis; pyridoxal 5'-phosphate biosynthesis. Functionally, catalyzes the formation of pyridoxal 5'-phosphate from ribose 5-phosphate (RBP), glyceraldehyde 3-phosphate (G3P) and ammonia. The ammonia is provided by the PdxT subunit. Can also use ribulose 5-phosphate and dihydroxyacetone phosphate as substrates, resulting from enzyme-catalyzed isomerization of RBP and G3P, respectively. This is Pyridoxal 5'-phosphate synthase subunit PdxS from Bacillus pumilus (strain SAFR-032).